We begin with the raw amino-acid sequence, 413 residues long: Multidrug resistance protein MdtA (413 aa).

Positions 1 to 20 are cleaved as a signal peptide; the sequence is MKGSNTFRWAIAIGVVVAAA. 2 disordered regions span residues 31–57 and 391–413; these read SPTAAPGVAAQAPHTASAGRRGMRDGP and EPQTTVADEKSPSRHEGQKGARA. Residues 397–413 are compositionally biased toward basic and acidic residues; that stretch reads ADEKSPSRHEGQKGARA.

It belongs to the membrane fusion protein (MFP) (TC 8.A.1) family. In terms of assembly, part of a tripartite efflux system composed of MdtA, MdtB and MdtC.

Its subcellular location is the cell inner membrane. The chain is Multidrug resistance protein MdtA from Salmonella typhimurium (strain LT2 / SGSC1412 / ATCC 700720).